The chain runs to 280 residues: UPF0494 membrane protein SPAC212.01c (280 aa).

Helical transmembrane passes span 107 to 127 (WPLLIIWSIIIVFAVDKKFEV), 144 to 164 (IWVPIAIYVCLLVLMLLSLIF), 178 to 198 (VIIAVLGAVLGMIIAVLGMII), and 199 to 219 (AALGMIIAALGATITGLLYFG).

It belongs to the UPF0494 family.

The protein resides in the membrane. The sequence is that of UPF0494 membrane protein SPAC212.01c from Schizosaccharomyces pombe (strain 972 / ATCC 24843) (Fission yeast).